The primary structure comprises 200 residues: Mediator of RNA polymerase II transcription subunit 29 (200 aa).

Composition is skewed to low complexity over residues 1-21 (MAAS…SGPS) and 36-48 (AQLV…GLLQ). Positions 1–48 (MAASQQQASAASSAAGVSGPSSAGGPGPQQQPQPPAQLVGPAQSGLLQ) are disordered. A2 is subject to N-acetylalanine.

Belongs to the Mediator complex subunit 29 family. Component of the Mediator complex, which is composed of MED1, MED4, MED6, MED7, MED8, MED9, MED10, MED11, MED12, MED13, MED13L, MED14, MED15, MED16, MED17, MED18, MED19, MED20, MED21, MED22, MED23, MED24, MED25, MED26, MED27, MED29, MED30, MED31, CCNC, CDK8 and CDC2L6/CDK11. The MED12, MED13, CCNC and CDK8 subunits form a distinct module termed the CDK8 module. Mediator containing the CDK8 module is less active than Mediator lacking this module in supporting transcriptional activation. Individual preparations of the Mediator complex lacking one or more distinct subunits have been variously termed ARC, CRSP, DRIP, PC2, SMCC and TRAP. Associates with the MED18/MED20 heteromer.

It is found in the nucleus. Functionally, component of the Mediator complex, a coactivator involved in the regulated transcription of nearly all RNA polymerase II-dependent genes. Mediator functions as a bridge to convey information from gene-specific regulatory proteins to the basal RNA polymerase II transcription machinery. Mediator is recruited to promoters by direct interactions with regulatory proteins and serves as a scaffold for the assembly of a functional preinitiation complex with RNA polymerase II and the general transcription factors. The chain is Mediator of RNA polymerase II transcription subunit 29 (MED29) from Pongo abelii (Sumatran orangutan).